The chain runs to 912 residues: Rho guanine nucleotide exchange factor 1 (912 aa).

Positions Glu-41–Arg-232 constitute an RGSL domain. The interval Lys-248 to Ser-413 is disordered. Residues Asp-283 to Asn-313 are compositionally biased toward basic and acidic residues. Acidic residues predominate over residues Ser-365–Gly-381. Ser-374 and Ser-409 each carry phosphoserine. The DH domain maps to Lys-416–Ala-605. The 114-residue stretch at Lys-647–Gly-760 folds into the PH domain. A Phosphothreonine modification is found at Thr-695. Position 738 is a phosphotyrosine; by JAK2 (Tyr-738). 2 disordered regions span residues Lys-763 to Ala-802 and Ala-841 to Ala-865. Over residues Pro-777–Glu-789 the composition is skewed to low complexity. At Ser-863 the chain carries Phosphoserine. A coiled-coil region spans residues Ala-865–Pro-896.

As to quaternary structure, interacts with RHOA, GNA12 and GNA13. Homooligomerizes through the coiled coil region. May interact with CCPG1. Interacts with CTNNAL1. In terms of processing, phosphorylated by PKCA. Angiotensin-2 induced Tyr-738 phosphorylation is mediated by JAK2. Ubiquitously expressed.

It localises to the cytoplasm. The protein resides in the membrane. Seems to play a role in the regulation of RhoA GTPase by guanine nucleotide-binding alpha-12 (GNA12) and alpha-13 (GNA13) subunits. Acts as a GTPase-activating protein (GAP) for GNA12 and GNA13, and as guanine nucleotide exchange factor (GEF) for RhoA GTPase. Activated G alpha 13/GNA13 stimulates the RhoGEF activity through interaction with the RGS-like domain. This GEF activity is inhibited by binding to activated GNA12. Mediates angiotensin-2-induced RhoA activation. In lymphoid follicles, may trigger activation of GNA13 as part of S1PR2-dependent signaling pathway that leads to inhibition of germinal center (GC) B cell growth and migration outside the GC niche. The sequence is that of Rho guanine nucleotide exchange factor 1 (ARHGEF1) from Homo sapiens (Human).